A 222-amino-acid polypeptide reads, in one-letter code: Putative metal transport protein MJ1569 (222 aa).

The next 6 membrane-spanning stretches (helical) occupy residues 3-23 (IPDG…MIPI), 39-59 (LPLL…NLPV), 81-101 (WVAT…FGDG), 102-122 (GITC…FVGY), 135-155 (VIAS…VAGF), and 180-200 (AFAH…IVVW).

This sequence belongs to the CbiM family.

It is found in the cell membrane. In terms of biological role, may be involved in metal transport. The protein is Putative metal transport protein MJ1569 of Methanocaldococcus jannaschii (strain ATCC 43067 / DSM 2661 / JAL-1 / JCM 10045 / NBRC 100440) (Methanococcus jannaschii).